Reading from the N-terminus, the 157-residue chain is Ribosomal RNA large subunit methyltransferase H (157 aa).

Residues G106 and 125-130 contribute to the S-adenosyl-L-methionine site; that span reads LSEMTF.

This sequence belongs to the RNA methyltransferase RlmH family. In terms of assembly, homodimer.

The protein localises to the cytoplasm. It catalyses the reaction pseudouridine(1915) in 23S rRNA + S-adenosyl-L-methionine = N(3)-methylpseudouridine(1915) in 23S rRNA + S-adenosyl-L-homocysteine + H(+). Specifically methylates the pseudouridine at position 1915 (m3Psi1915) in 23S rRNA. The chain is Ribosomal RNA large subunit methyltransferase H from Syntrophobacter fumaroxidans (strain DSM 10017 / MPOB).